The primary structure comprises 432 residues: Phosphomevalonate kinase (432 aa).

Residues lysine 10 and 142 to 148 each bind ATP; that span reads VEKTGLG.

The protein belongs to the GHMP kinase family. Mevalonate kinase subfamily.

It localises to the cytoplasm. It catalyses the reaction (R)-5-phosphomevalonate + ATP = (R)-5-diphosphomevalonate + ADP. Its pathway is isoprenoid biosynthesis; isopentenyl diphosphate biosynthesis via mevalonate pathway; isopentenyl diphosphate from (R)-mevalonate: step 2/3. Functionally, phosphomevalonate kinase; part of the second module of ergosterol biosynthesis pathway that includes the middle steps of the pathway. ERG8 converts 5-phosphomevalonate to 5-diphosphomevalonate. The second module is carried out in the vacuole and involves the formation of farnesyl diphosphate, which is also an important intermediate in the biosynthesis of ubiquinone, dolichol, heme and prenylated proteins. Activity by the mevalonate kinase ERG12 first converts mevalonate into 5-phosphomevalonate. 5-phosphomevalonate is then further converted to 5-diphosphomevalonate by the phosphomevalonate kinase ERG8. The diphosphomevalonate decarboxylase MVD then produces isopentenyl diphosphate. The isopentenyl-diphosphate delta-isomerase IDI1 then catalyzes the 1,3-allylic rearrangement of the homoallylic substrate isopentenyl (IPP) to its highly electrophilic allylic isomer, dimethylallyl diphosphate (DMAPP). Finally the farnesyl diphosphate synthase ERG20 catalyzes the sequential condensation of isopentenyl pyrophosphate with dimethylallyl pyrophosphate, and then with the resultant geranylpyrophosphate to the ultimate product farnesyl pyrophosphate. This is Phosphomevalonate kinase from Candida albicans (strain SC5314 / ATCC MYA-2876) (Yeast).